Here is an 812-residue protein sequence, read N- to C-terminus: Probable inorganic carbon transporter subunit DabA (812 aa).

Positions 337, 339, 499, and 514 each coordinate Zn(2+).

The protein belongs to the inorganic carbon transporter (TC 9.A.2) DabA family. Forms a complex with DabB. Requires Zn(2+) as cofactor.

The protein resides in the cell inner membrane. Functionally, part of an energy-coupled inorganic carbon pump. The polypeptide is Probable inorganic carbon transporter subunit DabA (Xanthomonas euvesicatoria pv. vesicatoria (strain 85-10) (Xanthomonas campestris pv. vesicatoria)).